Here is a 259-residue protein sequence, read N- to C-terminus: Imidazole glycerol phosphate synthase subunit HisF (259 aa).

Active-site residues include Asp11 and Asp130.

The protein belongs to the HisA/HisF family. As to quaternary structure, heterodimer of HisH and HisF.

It is found in the cytoplasm. It catalyses the reaction 5-[(5-phospho-1-deoxy-D-ribulos-1-ylimino)methylamino]-1-(5-phospho-beta-D-ribosyl)imidazole-4-carboxamide + L-glutamine = D-erythro-1-(imidazol-4-yl)glycerol 3-phosphate + 5-amino-1-(5-phospho-beta-D-ribosyl)imidazole-4-carboxamide + L-glutamate + H(+). It functions in the pathway amino-acid biosynthesis; L-histidine biosynthesis; L-histidine from 5-phospho-alpha-D-ribose 1-diphosphate: step 5/9. In terms of biological role, IGPS catalyzes the conversion of PRFAR and glutamine to IGP, AICAR and glutamate. The HisF subunit catalyzes the cyclization activity that produces IGP and AICAR from PRFAR using the ammonia provided by the HisH subunit. This is Imidazole glycerol phosphate synthase subunit HisF from Desulfovibrio desulfuricans (strain ATCC 27774 / DSM 6949 / MB).